Consider the following 436-residue polypeptide: 3-ketoacyl-CoA thiolase (436 aa).

Residue Cys99 is the Acyl-thioester intermediate of the active site. Active-site proton acceptor residues include His392 and Cys422.

It belongs to the thiolase-like superfamily. Thiolase family. Heterotetramer of two alpha chains (FadJ) and two beta chains (FadI).

It localises to the cytoplasm. The catalysed reaction is an acyl-CoA + acetyl-CoA = a 3-oxoacyl-CoA + CoA. It functions in the pathway lipid metabolism; fatty acid beta-oxidation. Catalyzes the final step of fatty acid oxidation in which acetyl-CoA is released and the CoA ester of a fatty acid two carbons shorter is formed. The polypeptide is 3-ketoacyl-CoA thiolase (Escherichia coli O9:H4 (strain HS)).